The chain runs to 583 residues: Sensor protein SrrB (583 aa).

The Cytoplasmic portion of the chain corresponds to 1–11; the sequence is MMSRLNSVVIK. Residues 12–32 traverse the membrane as a helical segment; sequence LWLTIILIVTTVLILLSIALI. Over 33-174 the chain is Extracellular; the sequence is TFMQYYFTQE…SIEDTNNAIT (142 aa). A helical transmembrane segment spans residues 175 to 195; it reads IITIITAVIFLTITTVFAFFL. The Cytoplasmic portion of the chain corresponds to 196–583; that stretch reads SSRITKPLRR…TFIIKLPKPE (388 aa). The region spanning 197 to 249 is the HAMP domain; that stretch reads SRITKPLRRLRDQATRVSEGDYSYKPSVTTKDEIGQLSQAFNQMSTEIEEHVD. One can recognise a Histidine kinase domain in the interval 366–583; that stretch reads NVSHELRTPI…TFIIKLPKPE (218 aa). Position 369 is a phosphohistidine; by autocatalysis (His-369).

It localises to the cell membrane. It carries out the reaction ATP + protein L-histidine = ADP + protein N-phospho-L-histidine.. Functionally, member of the two-component regulatory system SrrA/SrrB, which is involved in the global regulation of staphylococcal virulence factors in response to environmental oxygen levels as well as biofilm formation. Also plays an essential role in host-derived nitric oxide resistance by regulating hmp/flavohemoglobin, an enzyme that detoxifies nitric oxide by converting it to nitrate. Functions as a sensor protein kinase which is autophosphorylated at a histidine residue and transfers its phosphate group to SrrA. In turn, SrrA binds to the upstream promoter regions of the target genes to positively and negatively regulate their expression. The chain is Sensor protein SrrB (srrB) from Staphylococcus aureus (strain MRSA252).